Reading from the N-terminus, the 130-residue chain is Small ribosomal subunit protein uS11 (130 aa).

It belongs to the universal ribosomal protein uS11 family. As to quaternary structure, part of the 30S ribosomal subunit. Interacts with proteins S7 and S18. Binds to IF-3.

Located on the platform of the 30S subunit, it bridges several disparate RNA helices of the 16S rRNA. Forms part of the Shine-Dalgarno cleft in the 70S ribosome. This chain is Small ribosomal subunit protein uS11, found in Caldanaerobacter subterraneus subsp. tengcongensis (strain DSM 15242 / JCM 11007 / NBRC 100824 / MB4) (Thermoanaerobacter tengcongensis).